A 103-amino-acid chain; its full sequence is Small ribosomal subunit protein bS6c (103 aa).

It belongs to the bacterial ribosomal protein bS6 family.

The protein resides in the plastid. Its subcellular location is the chloroplast. Functionally, binds together with bS18 to 16S ribosomal RNA. This chain is Small ribosomal subunit protein bS6c, found in Thalassiosira pseudonana (Marine diatom).